We begin with the raw amino-acid sequence, 460 residues long: Keratin, type I cytoskeletal 27 (460 aa).

The segment at 1 to 83 (MSVRFSSASR…GNEHGLLSGN (83 aa)) is head. Positions 84–119 (EKVTMQNLNDRLASYLDNVRALEEANADLEQKIKGW) are coil 1A. Residues 84–399 (EKVTMQNLND…RLIDGEDGSC (316 aa)) form the IF rod domain. The segment at 120-141 (YEKFGPGSCRGLDHDYSRYFTV) is linker 1. The interval 142-233 (IDDLRNQIIS…KNHEEEMKAL (92 aa)) is coil 1B. The interval 234–256 (QCAAGGNVNVEMNAAPGVDLTVL) is linker 12. Residues 257 to 395 (LNNMRAEYEA…ETYCRLIDGE (139 aa)) form a coil 2 region. A tail region spans residues 396 to 460 (DGSCTKSKGY…NMKSEQRVPS (65 aa)). The interval 429 to 460 (DPRGKVPSSRVHTVEEKSTKVNNMKSEQRVPS) is disordered. Positions 448-460 (KVNNMKSEQRVPS) are enriched in polar residues.

It belongs to the intermediate filament family. In terms of assembly, heterotetramer of two type I and two type II keratins. Interacts with KRT6A to form filaments.

It localises to the cytoplasm. In terms of biological role, essential for the proper assembly of type I and type II keratin protein complexes and formation of keratin intermediate filaments in the inner root sheath (irs). This is Keratin, type I cytoskeletal 27 from Capra hircus (Goat).